A 954-amino-acid chain; its full sequence is Valine--tRNA ligase (954 aa).

The 'HIGH' region signature appears at 48-58 (PNVTGSLHMGH). Residues 560–564 (KMSKS) carry the 'KMSKS' region motif. Lys563 lines the ATP pocket. The stretch at 886–954 (INKDTELARL…RAQYLSIENL (69 aa)) forms a coiled coil.

Belongs to the class-I aminoacyl-tRNA synthetase family. ValS type 1 subfamily. In terms of assembly, monomer.

The protein localises to the cytoplasm. It catalyses the reaction tRNA(Val) + L-valine + ATP = L-valyl-tRNA(Val) + AMP + diphosphate. Its function is as follows. Catalyzes the attachment of valine to tRNA(Val). As ValRS can inadvertently accommodate and process structurally similar amino acids such as threonine, to avoid such errors, it has a 'posttransfer' editing activity that hydrolyzes mischarged Thr-tRNA(Val) in a tRNA-dependent manner. The protein is Valine--tRNA ligase of Mannheimia succiniciproducens (strain KCTC 0769BP / MBEL55E).